The chain runs to 424 residues: 26S proteasome regulatory subunit 6A homolog A (424 aa).

Residues 1 to 21 (MATPMVEDTSSFEEDQLASMS) are disordered. Ala2 is subject to N-acetylalanine. A Phosphoserine modification is found at Ser19. 212 to 219 (GPPGTGKT) is an ATP binding site. A Glycyl lysine isopeptide (Lys-Gly) (interchain with G-Cter in ubiquitin) cross-link involves residue Lys235. An O-acetylthreonine modification is found at Thr278. Glycyl lysine isopeptide (Lys-Gly) (interchain with G-Cter in ubiquitin) cross-links involve residues Lys279 and Lys416.

The protein belongs to the AAA ATPase family. Component of the 19S regulatory particle (RP/PA700) base subcomplex of the 26S proteasome. The 26S proteasome is composed of a core protease (CP), known as the 20S proteasome, capped at one or both ends by the 19S regulatory particle (RP/PA700). The RP/PA700 complex is composed of at least 17 different subunits in two subcomplexes, the base and the lid, which form the portions proximal and distal to the 20S proteolytic core, respectively. In terms of tissue distribution, ubiquitous.

It localises to the cytoplasm. Its subcellular location is the nucleus. The 26S proteasome is involved in the ATP-dependent degradation of ubiquitinated proteins. The regulatory (or ATPase) complex confers ATP dependency and substrate specificity to the 26S complex. Interacts with transit peptides of proteins targeted to the chloroplast, and may be involved in the degradation of unimported plastid protein precursors. Plays a essential role in the gametophyte development. Involved in tolerance to zinc deficiency, possibly through alleviation of oxidative stresses or processing of poly-ubiquitinated proteins. The sequence is that of 26S proteasome regulatory subunit 6A homolog A from Arabidopsis thaliana (Mouse-ear cress).